Here is a 207-residue protein sequence, read N- to C-terminus: Holliday junction branch migration complex subunit RuvA (207 aa).

Residues 1–71 (MIVSIAGKLV…RLTPRLIGFS (71 aa)) form a domain I region. The interval 72–149 (TLPERQFFDL…RFALMVAGGE (78 aa)) is domain II. Positions 150-155 (VADAME) are flexible linker. Residues 156–207 (VESPIVSDTYDALVTLGHSESDARKLIDETLATGKKFKDTESLLTAIYQRSK) are domain III.

Belongs to the RuvA family. As to quaternary structure, homotetramer. Forms an RuvA(8)-RuvB(12)-Holliday junction (HJ) complex. HJ DNA is sandwiched between 2 RuvA tetramers; dsDNA enters through RuvA and exits via RuvB. An RuvB hexamer assembles on each DNA strand where it exits the tetramer. Each RuvB hexamer is contacted by two RuvA subunits (via domain III) on 2 adjacent RuvB subunits; this complex drives branch migration. In the full resolvosome a probable DNA-RuvA(4)-RuvB(12)-RuvC(2) complex forms which resolves the HJ.

The protein localises to the cytoplasm. In terms of biological role, the RuvA-RuvB-RuvC complex processes Holliday junction (HJ) DNA during genetic recombination and DNA repair, while the RuvA-RuvB complex plays an important role in the rescue of blocked DNA replication forks via replication fork reversal (RFR). RuvA specifically binds to HJ cruciform DNA, conferring on it an open structure. The RuvB hexamer acts as an ATP-dependent pump, pulling dsDNA into and through the RuvAB complex. HJ branch migration allows RuvC to scan DNA until it finds its consensus sequence, where it cleaves and resolves the cruciform DNA. The sequence is that of Holliday junction branch migration complex subunit RuvA from Rhodopirellula baltica (strain DSM 10527 / NCIMB 13988 / SH1).